The chain runs to 373 residues: tRNA-specific 2-thiouridylase MnmA (373 aa).

Residues 12–19 and Met-38 each bind ATP; that span reads GMSGGVDS. An interaction with target base in tRNA region spans residues 98–100; it reads NPD. The active-site Nucleophile is the Cys-103. Cys-103 and Cys-200 are disulfide-bonded. Gly-127 contacts ATP. Residues 150 to 152 form an interaction with tRNA region; sequence KDQ. The active-site Cysteine persulfide intermediate is Cys-200. Positions 312 to 313 are interaction with tRNA; it reads RY.

This sequence belongs to the MnmA/TRMU family.

The protein localises to the cytoplasm. It carries out the reaction S-sulfanyl-L-cysteinyl-[protein] + uridine(34) in tRNA + AH2 + ATP = 2-thiouridine(34) in tRNA + L-cysteinyl-[protein] + A + AMP + diphosphate + H(+). Its function is as follows. Catalyzes the 2-thiolation of uridine at the wobble position (U34) of tRNA, leading to the formation of s(2)U34. This Streptococcus thermophilus (strain ATCC BAA-491 / LMD-9) protein is tRNA-specific 2-thiouridylase MnmA.